We begin with the raw amino-acid sequence, 328 residues long: DNA polymerase IV (328 aa).

The 182-residue stretch at 6 to 187 (IIHIDMDYFF…LDIGDFPGVG (182 aa)) folds into the UmuC domain. Mg(2+) is bound by residues aspartate 10 and aspartate 105. Residue glutamate 106 is part of the active site.

This sequence belongs to the DNA polymerase type-Y family. As to quaternary structure, monomer. The cofactor is Mg(2+).

The protein resides in the cytoplasm. The catalysed reaction is DNA(n) + a 2'-deoxyribonucleoside 5'-triphosphate = DNA(n+1) + diphosphate. Its function is as follows. Poorly processive, error-prone DNA polymerase involved in untargeted mutagenesis. Copies undamaged DNA at stalled replication forks, which arise in vivo from mismatched or misaligned primer ends. These misaligned primers can be extended by PolIV. Exhibits no 3'-5' exonuclease (proofreading) activity. May be involved in translesional synthesis, in conjunction with the beta clamp from PolIII. In Staphylococcus aureus (strain bovine RF122 / ET3-1), this protein is DNA polymerase IV.